The following is a 47-amino-acid chain: Large ribosomal subunit protein bL33C (47 aa).

It belongs to the bacterial ribosomal protein bL33 family.

The protein is Large ribosomal subunit protein bL33C of Staphylococcus aureus (strain MRSA252).